The chain runs to 638 residues: 3D-(3,5/4)-trihydroxycyclohexane-1,2-dione hydrolase (638 aa).

E67 is a binding site for thiamine diphosphate. The interval 442–523 (SLPGDLQRLW…INIMLFDNSG (82 aa)) is thiamine pyrophosphate binding. The Mg(2+) site is built by D494 and N521.

Belongs to the TPP enzyme family. Mg(2+) is required as a cofactor. The cofactor is thiamine diphosphate.

It catalyses the reaction 3D-3,5/4-trihydroxycyclohexane-1,2-dione + H2O = 5-deoxy-D-glucuronate + H(+). It participates in polyol metabolism; myo-inositol degradation into acetyl-CoA; acetyl-CoA from myo-inositol: step 3/7. Functionally, involved in the cleavage of the C1-C2 bond of 3D-(3,5/4)-trihydroxycyclohexane-1,2-dione (THcHDO) to yield 5-deoxy-glucuronate (5DG). The polypeptide is 3D-(3,5/4)-trihydroxycyclohexane-1,2-dione hydrolase (Listeria innocua serovar 6a (strain ATCC BAA-680 / CLIP 11262)).